A 152-amino-acid polypeptide reads, in one-letter code: MAKNTLSSRFRKVDIDEYDENKFVDDQLQEEPAEPQGPDEAEVDSLIRQGELLRAFQSALRNSPVNSKNQVAKERTQAIVLKVLTSFKSNEIEKAVNTLDPNGIDLLMKYIYKGFEKPTENSSAILLQWHEKAFVIGGLGSIVRVLTSRKTV.

The segment at 21–44 (NKFVDDQLQEEPAEPQGPDEAEVD) is disordered. The segment covering 27–43 (QLQEEPAEPQGPDEAEV) has biased composition (acidic residues).

This sequence belongs to the ARPC5 family. As to quaternary structure, component of the Arp2/3 complex composed of actr2/arp2, actr3/arp3, arpc1 (arpc1a or arpc1b), arpc2, arpc3, arpc4 and arpc5.

It localises to the cytoplasm. It is found in the cytoskeleton. Its subcellular location is the cell projection. The protein resides in the nucleus. Functionally, component of the Arp2/3 complex, a multiprotein complex that mediates actin polymerization upon stimulation by nucleation-promoting factor (NPF). The Arp2/3 complex mediates the formation of branched actin networks in the cytoplasm, providing the force for cell motility. In addition to its role in the cytoplasmic cytoskeleton, the Arp2/3 complex also promotes actin polymerization in the nucleus, thereby regulating gene transcription and repair of damaged DNA. The Arp2/3 complex promotes homologous recombination (HR) repair in response to DNA damage by promoting nuclear actin polymerization, leading to drive motility of double-strand breaks (DSBs). The polypeptide is Actin-related protein 2/3 complex subunit 5-B (arpc5-b) (Xenopus laevis (African clawed frog)).